The primary structure comprises 390 residues: Centrosomal protein of 44 kDa (390 aa).

The segment at 11-195 (RNLEQVLRLL…ISEDTLSPIT (185 aa)) is binds with microtubules and centrioles. Residues 233–269 (EITALQTMLAECQENLKKLTSIEKRLDCLEQKMKGKV) adopt a coiled-coil conformation. A disordered region spans residues 322-348 (RKSEVERPASIPLSSGYSTASSDSTPR). 2 positions are modified to phosphoserine: S331 and S345. Low complexity predominate over residues 335–345 (SSGYSTASSDS). Residue T346 is modified to Phosphothreonine. Residues 361 to 385 (SEETTIQKMERMKKMFEETAELLKC) are a coiled coil.

Interacts with CROCC. Interacts with POC1B; the interaction is direct and recruits POC1B to centriolar microtubules. Binds to centriolar microtubules.

It is found in the cytoplasm. Its subcellular location is the cytoskeleton. It localises to the microtubule organizing center. The protein resides in the centrosome. The protein localises to the centriole. It is found in the spindle pole. Its subcellular location is the midbody. In terms of biological role, centriole-enriched microtubule-binding protein involved in centriole biogenesis. In collaboration with CEP295 and POC1B, is required for the centriole-to-centrosome conversion by ensuring the formation of bona fide centriole wall. Functions as a linker component that maintains centrosome cohesion. Associates with CROCC and regulates its stability and localization to the centrosome. The protein is Centrosomal protein of 44 kDa (CEP44) of Homo sapiens (Human).